A 114-amino-acid chain; its full sequence is Iron-sulfur cluster insertion protein ErpA (114 aa).

Iron-sulfur cluster-binding residues include C42, C106, and C108.

This sequence belongs to the HesB/IscA family. As to quaternary structure, homodimer. Iron-sulfur cluster serves as cofactor.

In terms of biological role, required for insertion of 4Fe-4S clusters for at least IspG. The protein is Iron-sulfur cluster insertion protein ErpA of Klebsiella pneumoniae (strain 342).